The following is a 208-amino-acid chain: Small ribosomal subunit protein uS5 (208 aa).

The S5 DRBM domain maps to 48-111 (LEDEVLDINM…DAAKLDITYI (64 aa)).

Belongs to the universal ribosomal protein uS5 family. As to quaternary structure, part of the 30S ribosomal subunit. Contacts protein S4.

With S4 and S12 plays an important role in translational accuracy. The chain is Small ribosomal subunit protein uS5 from Methanosarcina barkeri (strain Fusaro / DSM 804).